A 181-amino-acid polypeptide reads, in one-letter code: Transmembrane protein 190 (181 aa).

The signal sequence occupies residues 1–21 (MVASGIPALSLFLLMQGSVDG). The Extracellular portion of the chain corresponds to 22-81 (NGIQGFFYPWSCEGDVWDRESCGGQAAIENPNLCLRLRCCYRDGVCYHQRPDETMRRKHM). A P-type domain is found at 31-71 (WSCEGDVWDRESCGGQAAIENPNLCLRLRCCYRDGVCYHQR). Intrachain disulfides connect Cys-33-Cys-61, Cys-43-Cys-60, and Cys-55-Cys-67. Residues 82 to 102 (WALGWTCGGLLFLISSICLFW) form a helical membrane-spanning segment. Residues 103-181 (WAKRRDMLHL…EETEGGEDED (79 aa)) are Cytoplasmic-facing. The segment at 135 to 181 (TLSDKKTSAGSVPTSLPTEGNADVSGATEGEGTTEGGEETEGGEDED) is disordered. Residues 142 to 152 (SAGSVPTSLPT) are compositionally biased toward polar residues. Acidic residues predominate over residues 170–181 (GGEETEGGEDED).

Its subcellular location is the membrane. In Canis lupus familiaris (Dog), this protein is Transmembrane protein 190 (TMEM190).